Here is a 95-residue protein sequence, read N- to C-terminus: MTTTTETWQLFAHGRVQGVGYRAACADRATSLGLGGWVRNRVDGRVEVLASGPRERLEALRVWMEAGPPAAQVSKVEVAQAAPQLFDRFDWLPTA.

Residues 7-93 (TWQLFAHGRV…QLFDRFDWLP (87 aa)) form the Acylphosphatase-like domain. Residues arginine 22 and asparagine 40 contribute to the active site.

Belongs to the acylphosphatase family.

The enzyme catalyses an acyl phosphate + H2O = a carboxylate + phosphate + H(+). This Cupriavidus metallidurans (strain ATCC 43123 / DSM 2839 / NBRC 102507 / CH34) (Ralstonia metallidurans) protein is Acylphosphatase (acyP).